The following is a 179-amino-acid chain: Lebocin-4 (179 aa).

The first 16 residues, 1–16, serve as a signal peptide directing secretion; sequence MYKFLVFSSVLVLFFA. A propeptide spanning residues 17-120 is cleaved from the precursor; that stretch reads QASCQRFIQP…RPIESHRNTR (104 aa). Residue Thr-135 is glycosylated (O-linked (GalNAc...) threonine). The propeptide occupies 153 to 179; that stretch reads RRHASDDQEELRHHNEHFLIPRDILQD.

It belongs to the lebocin family. O-glycosylation is important for the antibacterial activity of lebocin. As to expression, hemolymph. Produced in fat body.

Its subcellular location is the secreted. In terms of biological role, antibacterial peptide. This chain is Lebocin-4 (LEB4), found in Bombyx mori (Silk moth).